Consider the following 211-residue polypeptide: Claudin-7 (211 aa).

The Cytoplasmic segment spans residues 1–7 (MANSGLQ). The chain crosses the membrane as a helical span at residues 8–28 (LLGFSMAMLGWVGLIASTAIP). Residues 29 to 81 (QWQMSSYAGDNIITAQAMYKGLWMECVTQSTGMMSCKMYDSVLALPAATQATR) lie on the Extracellular side of the membrane. Residues 82 to 102 (ALMIVSLVLGFLAMFVATMGM) form a helical membrane-spanning segment. The Cytoplasmic segment spans residues 103 to 119 (KCTRCGGDDKVKKARIA). Residues 120-140 (MTGGIIFIVAGLAALVACSWI) traverse the membrane as a helical segment. At 141–160 (GHQIVTDFYNPLTPMNIKYE) the chain is on the extracellular side. Residues 161–181 (FGPAIFIGWAGSALVLLGGAL) traverse the membrane as a helical segment. Over 182-211 (LSCSCPGSESKAAYRAPRSYPKSNSSKEYV) the chain is Cytoplasmic. Residues 210-211 (YV) form an interactions with TJP1, TJP2 and TJP3 region.

It belongs to the claudin family. In terms of assembly, directly interacts with TJP1/ZO-1, TJP2/ZO-2 and TJP3/ZO-3. The phosphorylated form interacts with EPCAM. Phosphorylated.

The protein localises to the cell membrane. It localises to the basolateral cell membrane. The protein resides in the cell junction. It is found in the tight junction. Its function is as follows. Plays a major role in tight junction-specific obliteration of the intercellular space. The chain is Claudin-7 (Cldn7) from Rattus norvegicus (Rat).